We begin with the raw amino-acid sequence, 992 residues long: P3N-PIPO polyprotein (992 aa).

The Peptidase S30 domain occupies 168–308 (TSQCRKPTYV…VENMEDIQHY (141 aa)). Active-site for P1 proteinase activity residues include His221, Glu230, and Ser262. The Involved in interaction with stylet and aphid transmission motif lies at 361-364 (KLSC). The short motif at 617–619 (PTK) is the Involved in virions binding and aphid transmission element. Residues 643-765 (MYIAKEGFCY…QSEMKFYRVG (123 aa)) form the Peptidase C6 domain. Catalysis depends on for helper component proteinase activity residues Cys651 and His724.

The protein belongs to the potyviridae P3N-PIPO polyprotein family. As to quaternary structure, interacts (via PIPO domain) with host PCaP1 protein; this interaction may help to anchor the movement complex to the plasma membrane from which the complex could move to the plasmodesmata. Post-translationally, potyviral RNA is expressed as two polyproteins which undergo post-translational proteolytic processing. Genome polyprotein is processed by NIa-pro, P1 and HC-pro proteinases resulting in the production of at least ten individual proteins. P3N-PIPO is cleaved by P1 and HC-pro proteinases resulting in the production of three individual proteins. The P1 proteinase and the HC-pro cleave only their respective C-termini autocatalytically.

The protein resides in the host cell junction. It is found in the host plasmodesma. The enzyme catalyses Hydrolyzes a Gly-|-Gly bond at its own C-terminus, commonly in the sequence -Tyr-Xaa-Val-Gly-|-Gly, in the processing of the potyviral polyprotein.. Functionally, required for aphid transmission and also has proteolytic activity. Only cleaves a Gly-Gly dipeptide at its own C-terminus. Interacts with virions and aphid stylets. Acts as a suppressor of RNA-mediated gene silencing, also known as post-transcriptional gene silencing (PTGS), a mechanism of plant viral defense that limits the accumulation of viral RNAs. May have RNA-binding activity. Its function is as follows. Allows efficient cell to cell propagation, by bypassing the host cell wall barrier. Transports viral genome to neighboring plant cells directly through plasmosdesmata, without any budding. The polypeptide is P3N-PIPO polyprotein (Soybean mosaic virus (strain G2) (SMV)).